The primary structure comprises 227 residues: Small ribosomal subunit protein uS3 (227 aa).

The region spanning 24-94 (LDEYLEEELG…RVSIEVKELP (71 aa)) is the KH type-2 domain. Residues 207–227 (EEVEDELKELIGKSEDEAEGA) form a disordered region.

Belongs to the universal ribosomal protein uS3 family. As to quaternary structure, part of the 30S ribosomal subunit.

Functionally, binds the lower part of the 30S subunit head. This Methanopyrus kandleri (strain AV19 / DSM 6324 / JCM 9639 / NBRC 100938) protein is Small ribosomal subunit protein uS3.